Reading from the N-terminus, the 177-residue chain is Calerythrin (177 aa).

EF-hand domains are found at residues 5–40, 45–90, 100–134, and 134–169; these read IASD…IAEA, AGAA…NLIF, VLGP…ALGM, and MSKA…FHFG. Aspartate 18, aspartate 20, asparagine 22, and aspartate 29 together coordinate Ca(2+). The Ca(2+) site is built by aspartate 113, asparagine 115, aspartate 117, glutamine 119, glutamate 124, aspartate 147, asparagine 149, asparagine 151, glutamate 153, and glutamate 158.

This Saccharopolyspora erythraea (Streptomyces erythraeus) protein is Calerythrin.